A 79-amino-acid chain; its full sequence is Small cysteine-rich protein 2 (79 aa).

The signal sequence occupies residues 1-21 (MRSQHVLILLLGLVCASQVLG). Positions 22–35 (KHLTKVKAKALHYD) are excised as a propeptide.

It belongs to the Cnidaria small cysteine-rich protein (SCRiP) family. delta subfamily. In terms of processing, contains 4 disulfide bonds.

It localises to the secreted. The protein localises to the nematocyst. In terms of biological role, this recombinant protein induces severe neurotoxicity on zebrafish larvae (Danio rerio) at a concentration of 230 mg/ml, but does not show toxicity when injected in blowfly larvae (Sarcophaga falculata). All fish incubated with this protein died within 200 minutes of exposure. Has also been claimed to be implied in calcification, but this function seems improbable. The sequence is that of Small cysteine-rich protein 2 from Acropora millepora (Staghorn coral).